We begin with the raw amino-acid sequence, 184 residues long: Probable cobalt-precorrin-6B C(15)-methyltransferase (decarboxylating) (184 aa).

Residues Thr12, 36 to 40 (GCGTG), Asp59, and Ala87 contribute to the S-adenosyl-L-methionine site.

This sequence belongs to the methyltransferase superfamily. Archaeal-type CbiT family.

It carries out the reaction Co-precorrin-6B + S-adenosyl-L-methionine = Co-precorrin-7 + S-adenosyl-L-homocysteine + CO2. It participates in cofactor biosynthesis; adenosylcobalamin biosynthesis; cob(II)yrinate a,c-diamide from sirohydrochlorin (anaerobic route): step 8/10. Its function is as follows. Catalyzes the methylation of C-15 in cobalt-precorrin-6B followed by the decarboxylation of C-12 to form cobalt-precorrin-7. The polypeptide is Probable cobalt-precorrin-6B C(15)-methyltransferase (decarboxylating) (Methanosarcina acetivorans (strain ATCC 35395 / DSM 2834 / JCM 12185 / C2A)).